A 428-amino-acid chain; its full sequence is Lysophosphatidic acid phosphatase type 6 (428 aa).

The transit peptide at 1–32 (MITGVFSMRLWTPVGVLTSLAYCLHQRRVALA) directs the protein to the mitochondrion. Residues 58 to 168 (RHGARSPRKP…VFIRSTNIFR (111 aa)) are substrate binding. His-59 acts as the Nucleophile in catalysis. The active-site Proton donor is Asp-335.

This sequence belongs to the histidine acid phosphatase family. Monomer.

It localises to the mitochondrion. It catalyses the reaction a phosphate monoester + H2O = an alcohol + phosphate. The enzyme catalyses 1-(9Z-octadecenoyl)-sn-glycero-3-phosphate + H2O = 1-(9Z-octadecenoyl)-sn-glycerol + phosphate. Hydrolyzes lysophosphatidic acid (LPA) containing a medium length fatty acid chain to the corresponding monoacylglycerol. Has highest activity with lysophosphatidic acid containing myristate (C14:0), monounsaturated oleate (C18:1) or palmitate (C16:0), and lower activity with C18:0 and C6:0 lysophosphatidic acid. The chain is Lysophosphatidic acid phosphatase type 6 (ACP6) from Pongo abelii (Sumatran orangutan).